A 200-amino-acid chain; its full sequence is Anthranilate synthase component 2, pyocyanine specific (200 aa).

Positions arginine 2–arginine 195 constitute a Glutamine amidotransferase type-1 domain. Glycine 56–glycine 58 contacts L-glutamine. Catalysis depends on cysteine 83, which acts as the Nucleophile; for GATase activity. Residues glutamine 87 and serine 133–leucine 134 contribute to the L-glutamine site. Active-site for GATase activity residues include histidine 169 and glutamate 171.

Heterotetramer consisting of two non-identical subunits: a beta subunit (PhnB) and a large alpha subunit (PhnA).

It carries out the reaction chorismate + L-glutamine = anthranilate + pyruvate + L-glutamate + H(+). Its pathway is secondary metabolite biosynthesis; pyocyanine biosynthesis. In terms of biological role, part of a heterotetrameric complex that catalyzes the two-step biosynthesis of anthranilate, a precursor for Pseudomonas quinolone signal (2-heptyl-3-hydroxy-4-quinolone; PQS) production which is required to induce the genes for the biosynthesis of the virulence factor pyocyanine (PCN), a characteristic blue-green phenazine pigment produced by P.aeruginosa. In the first step, the glutamine-binding beta subunit (PhnB) of anthranilate synthase (AS) provides the glutamine amidotransferase activity which generates ammonia as a substrate that, along with chorismate, is used in the second step, catalyzed by the large alpha subunit of AS (PhnA) to produce anthranilate. This Pseudomonas aeruginosa (strain ATCC 15692 / DSM 22644 / CIP 104116 / JCM 14847 / LMG 12228 / 1C / PRS 101 / PAO1) protein is Anthranilate synthase component 2, pyocyanine specific.